Reading from the N-terminus, the 481-residue chain is Proline--tRNA ligase (481 aa).

Belongs to the class-II aminoacyl-tRNA synthetase family. ProS type 3 subfamily. As to quaternary structure, homodimer.

Its subcellular location is the cytoplasm. The enzyme catalyses tRNA(Pro) + L-proline + ATP = L-prolyl-tRNA(Pro) + AMP + diphosphate. Functionally, catalyzes the attachment of proline to tRNA(Pro) in a two-step reaction: proline is first activated by ATP to form Pro-AMP and then transferred to the acceptor end of tRNA(Pro). The protein is Proline--tRNA ligase of Chlorobium chlorochromatii (strain CaD3).